The following is a 391-amino-acid chain: MSRFLICSFALVLLYPAGIDMYLVGLPRIAADLNASEAQLHIAFSVYLAGMAAAMLFAGKVADRSGRKPVAIPGAALFIIASVFCSLAETSALFLAGRFLQGLGAGCCYVVAFAILRDTLDDRRRAKVLSLLNGITCIIPVLAPVLGHLIMLKFPWQSLFWTMATMGIALLMLSLFILKETRPAAPTTSDKPRENSESLLNRFFLSRVVITTLSVSVILTFVNTSPVLLMEIMGFERGEYATIMALTAGVSMTVSFSTPFALGIFKPRTLMITSQVLFLAAGITLAVSPSHAVSLFGITLICAGFSVGFGVAMSQALGPFSLRAGVASSTLGIAQVCGSSLWIWLAAVVGIGAWNMLIGILIACSIVSLLLIMFVAPGRPVAAHEEIHHHA.

12 helical membrane-spanning segments follow: residues 4–24 (FLIC…MYLV), 42–62 (IAFS…GKVA), 69–89 (PVAI…SLAE), 93–113 (LFLA…VVAF), 131–151 (LLNG…HLIM), 158–178 (SLFW…LFIL), 203–222 (FFLS…LTFV), 245–265 (ALTA…LGIF), 269–289 (TLMI…AVSP), 293–313 (VSLF…GVAM), 331–351 (LGIA…VVGI), and 356–376 (MLIG…MFVA).

This sequence belongs to the major facilitator superfamily. DHA1 family. MdtL (TC 2.A.1.2.22) subfamily.

The protein resides in the cell inner membrane. Functionally, confers resistance to chloramphenicol. The polypeptide is Multidrug resistance protein MdtL (Escherichia coli O45:K1 (strain S88 / ExPEC)).